The primary structure comprises 171 residues: Transcription antitermination protein NusB (171 aa).

It belongs to the NusB family.

In terms of biological role, involved in transcription antitermination. Required for transcription of ribosomal RNA (rRNA) genes. Binds specifically to the boxA antiterminator sequence of the ribosomal RNA (rrn) operons. The polypeptide is Transcription antitermination protein NusB (Brucella suis (strain ATCC 23445 / NCTC 10510)).